The chain runs to 454 residues: Bifunctional protein GlmU (454 aa).

The tract at residues 1 to 226 (MSLNVVILAA…PIETEGANNR (226 aa)) is pyrophosphorylase. Residues 8 to 11 (LAAG), lysine 22, glutamine 73, 78 to 79 (GT), 100 to 102 (YGD), glycine 137, glutamate 151, asparagine 166, and asparagine 224 each bind UDP-N-acetyl-alpha-D-glucosamine. Aspartate 102 provides a ligand contact to Mg(2+). Residue asparagine 224 participates in Mg(2+) binding. The segment at 227-247 (VQLAALERAYQARRAEELMLA) is linker. The interval 248-454 (GANLRDPARI…GWQRPVKKPK (207 aa)) is N-acetyltransferase. UDP-N-acetyl-alpha-D-glucosamine-binding residues include arginine 330 and lysine 348. The active-site Proton acceptor is the histidine 360. UDP-N-acetyl-alpha-D-glucosamine-binding residues include tyrosine 363 and asparagine 374. Acetyl-CoA-binding positions include alanine 377, 383-384 (NY), serine 402, alanine 420, and arginine 437.

The protein in the N-terminal section; belongs to the N-acetylglucosamine-1-phosphate uridyltransferase family. This sequence in the C-terminal section; belongs to the transferase hexapeptide repeat family. Homotrimer. Mg(2+) serves as cofactor.

The protein resides in the cytoplasm. It catalyses the reaction alpha-D-glucosamine 1-phosphate + acetyl-CoA = N-acetyl-alpha-D-glucosamine 1-phosphate + CoA + H(+). The enzyme catalyses N-acetyl-alpha-D-glucosamine 1-phosphate + UTP + H(+) = UDP-N-acetyl-alpha-D-glucosamine + diphosphate. The protein operates within nucleotide-sugar biosynthesis; UDP-N-acetyl-alpha-D-glucosamine biosynthesis; N-acetyl-alpha-D-glucosamine 1-phosphate from alpha-D-glucosamine 6-phosphate (route II): step 2/2. Its pathway is nucleotide-sugar biosynthesis; UDP-N-acetyl-alpha-D-glucosamine biosynthesis; UDP-N-acetyl-alpha-D-glucosamine from N-acetyl-alpha-D-glucosamine 1-phosphate: step 1/1. It participates in bacterial outer membrane biogenesis; LPS lipid A biosynthesis. In terms of biological role, catalyzes the last two sequential reactions in the de novo biosynthetic pathway for UDP-N-acetylglucosamine (UDP-GlcNAc). The C-terminal domain catalyzes the transfer of acetyl group from acetyl coenzyme A to glucosamine-1-phosphate (GlcN-1-P) to produce N-acetylglucosamine-1-phosphate (GlcNAc-1-P), which is converted into UDP-GlcNAc by the transfer of uridine 5-monophosphate (from uridine 5-triphosphate), a reaction catalyzed by the N-terminal domain. This chain is Bifunctional protein GlmU, found in Shewanella amazonensis (strain ATCC BAA-1098 / SB2B).